We begin with the raw amino-acid sequence, 648 residues long: Phosphatidylinositol-3,5-bisphosphate 3-phosphatase MTMR14 (648 aa).

Residues 1–19 show a composition bias toward low complexity; that stretch reads MAGARAAAAASAGSTASSG. Residues 1 to 27 form a disordered region; sequence MAGARAAAAASAGSTASSGSPPPQEPG. An N6-acetyllysine modification is found at lysine 193. N-linked (GlcNAc...) asparagine glycans are attached at residues asparagine 225 and asparagine 240. The active-site Phosphocysteine intermediate is cysteine 329. A 1,2-diacyl-sn-glycero-3-phospho-(1D-myo-inositol-3,5-bisphosphate) contacts are provided by glycine 332, tryptophan 333, aspartate 334, arginine 335, and arginine 381. A 1,2-diacyl-sn-glycero-3-phospho-(1D-myo-inositol-3-phosphate)-binding residues include glycine 332, tryptophan 333, aspartate 334, arginine 335, and arginine 381. The segment at 471-544 is disordered; it reads PTQAAWRKSH…PRSVDHPLPG (74 aa). The segment covering 494–506 has biased composition (basic and acidic residues); it reads PSEERLPSHHGLT. Position 516 is a phosphoserine (serine 516). Residue asparagine 517 is glycosylated (N-linked (GlcNAc...) asparagine). Residues serine 528, serine 578, and serine 622 each carry the phosphoserine modification. Arginine 636 bears the Omega-N-methylarginine mark.

This sequence belongs to the protein-tyrosine phosphatase family. Non-receptor class myotubularin subfamily.

The protein resides in the cytoplasm. It catalyses the reaction a 1,2-diacyl-sn-glycero-3-phospho-(1D-myo-inositol-3,5-bisphosphate) + H2O = a 1,2-diacyl-sn-glycero-3-phospho-(1D-myo-inositol-5-phosphate) + phosphate. The catalysed reaction is a 1,2-diacyl-sn-glycero-3-phospho-(1D-myo-inositol-3-phosphate) + H2O = a 1,2-diacyl-sn-glycero-3-phospho-(1D-myo-inositol) + phosphate. Its function is as follows. Lipid phosphatase that specifically dephosphorylates the D-3 position of phosphatidylinositol 3-phosphate and phosphatidylinositol 3,5-bisphosphate, generating phosphatidylinositol and phosphatidylinositol 5-phosphate. The polypeptide is Phosphatidylinositol-3,5-bisphosphate 3-phosphatase MTMR14 (Mus musculus (Mouse)).